Here is a 258-residue protein sequence, read N- to C-terminus: Acyl-[acyl-carrier-protein]--UDP-N-acetylglucosamine O-acyltransferase (258 aa).

The protein belongs to the transferase hexapeptide repeat family. LpxA subfamily. Homotrimer.

Its subcellular location is the cytoplasm. It catalyses the reaction a (3R)-hydroxyacyl-[ACP] + UDP-N-acetyl-alpha-D-glucosamine = a UDP-3-O-[(3R)-3-hydroxyacyl]-N-acetyl-alpha-D-glucosamine + holo-[ACP]. The protein operates within glycolipid biosynthesis; lipid IV(A) biosynthesis; lipid IV(A) from (3R)-3-hydroxytetradecanoyl-[acyl-carrier-protein] and UDP-N-acetyl-alpha-D-glucosamine: step 1/6. In terms of biological role, involved in the biosynthesis of lipid A, a phosphorylated glycolipid that anchors the lipopolysaccharide to the outer membrane of the cell. In Neisseria meningitidis serogroup B (strain ATCC BAA-335 / MC58), this protein is Acyl-[acyl-carrier-protein]--UDP-N-acetylglucosamine O-acyltransferase.